The chain runs to 218 residues: Glutathione S-transferase-like protein OpS6 (218 aa).

In terms of domain architecture, GST N-terminal spans 5–86; sequence QPIKLYAHKK…YLIEQYDKDG (82 aa). The GST C-terminal domain maps to 92–218; sequence SLQDKSLARA…KIAATKAALA (127 aa).

Belongs to the GST superfamily.

Its pathway is secondary metabolite biosynthesis. Its function is as follows. Glutathione S-transferase-like protein; part of the gene cluster that mediates the biosynthesis of the bibenzoquinone oosporein, a metabolite required for fungal virulence that acts by evading host immunity to facilitate fungal multiplication in insects. The non-reducing polyketide synthase OpS1 produces orsellinic acid by condensing acetyl-CoA with 3 malonyl-CoA units. Orsellinic acid is then hydroxylated to benzenetriol by the hydroxylase OpS4. The intermediate is oxidized either nonenzymatically to 5,5'-dideoxy-oosporein or enzymatically to benzenetetrol by the oxidoreductase OpS7. The latter is further dimerized to oosporein by the catalase OpS5. OpS6 probably functions en route for protecting cells against oxidative stress by scavenging any leaked free radical form of benzenetetrol by activating the thiol group of glutathione. The chain is Glutathione S-transferase-like protein OpS6 from Beauveria bassiana (strain ARSEF 2860) (White muscardine disease fungus).